A 361-amino-acid polypeptide reads, in one-letter code: Phosphoserine aminotransferase (361 aa).

Residue Arg42 coordinates L-glutamate. Pyridoxal 5'-phosphate is bound by residues 76–77, Trp102, Thr152, Asp172, and Gln195; that span reads AT. At Lys196 the chain carries N6-(pyridoxal phosphate)lysine. 237-238 contributes to the pyridoxal 5'-phosphate binding site; it reads NT.

Belongs to the class-V pyridoxal-phosphate-dependent aminotransferase family. SerC subfamily. In terms of assembly, homodimer. Requires pyridoxal 5'-phosphate as cofactor.

Its subcellular location is the cytoplasm. It catalyses the reaction O-phospho-L-serine + 2-oxoglutarate = 3-phosphooxypyruvate + L-glutamate. The catalysed reaction is 4-(phosphooxy)-L-threonine + 2-oxoglutarate = (R)-3-hydroxy-2-oxo-4-phosphooxybutanoate + L-glutamate. It functions in the pathway amino-acid biosynthesis; L-serine biosynthesis; L-serine from 3-phospho-D-glycerate: step 2/3. The protein operates within cofactor biosynthesis; pyridoxine 5'-phosphate biosynthesis; pyridoxine 5'-phosphate from D-erythrose 4-phosphate: step 3/5. Its function is as follows. Catalyzes the reversible conversion of 3-phosphohydroxypyruvate to phosphoserine and of 3-hydroxy-2-oxo-4-phosphonooxybutanoate to phosphohydroxythreonine. The protein is Phosphoserine aminotransferase of Xanthomonas campestris pv. campestris (strain B100).